A 293-amino-acid polypeptide reads, in one-letter code: Methylsterol monooxygenase 1 (293 aa).

2 helical membrane-spanning segments follow: residues 55–75 (LIVH…FQFI) and 100–120 (VLLF…YYFT). A Fatty acid hydroxylase domain is found at 145–274 (CAVIEDTWHY…FTWWDRIFGT (130 aa)). The short motif at 157–161 (HRLLH) is the Histidine box-1 element. A Histidine box-2 motif is present at residues 170–174 (HKIHH). The helical transmembrane segment at 199–219 (FFIGIMLLCDHVILLWAWVTV) threads the bilayer. Positions 249–255 (HHDFHHM) match the Histidine box-3 motif.

This sequence belongs to the sterol desaturase family. Requires Fe cation as cofactor. Post-translationally, ubiquitinated by MARCHF6, leading to proteasomal degradation.

The protein resides in the endoplasmic reticulum membrane. It catalyses the reaction 4,4-dimethyl-5alpha-cholest-7-en-3beta-ol + 6 Fe(II)-[cytochrome b5] + 3 O2 + 5 H(+) = 4alpha-carboxy-4beta-methyl-5alpha-cholest-7-ene-3beta-ol + 6 Fe(III)-[cytochrome b5] + 4 H2O. The enzyme catalyses 4,4-dimethyl-5alpha-cholesta-8,24-dien-3beta-ol + 6 Fe(II)-[cytochrome b5] + 3 O2 + 5 H(+) = 4beta-methylzymosterol-4alpha-carboxylate + 6 Fe(III)-[cytochrome b5] + 4 H2O. The catalysed reaction is 4alpha-methylzymosterol + 6 Fe(II)-[cytochrome b5] + 3 O2 + 5 H(+) = 4alpha-carboxyzymosterol + 6 Fe(III)-[cytochrome b5] + 4 H2O. It carries out the reaction 4alpha-methyl-5alpha-cholest-7-en-3beta-ol + 6 Fe(II)-[cytochrome b5] + 3 O2 + 5 H(+) = 4alpha-carboxy-5alpha-cholest-7-en-3beta-ol + 6 Fe(III)-[cytochrome b5] + 4 H2O. It catalyses the reaction 4,4-dimethyl-5alpha-cholest-8-en-3beta-ol + 6 Fe(II)-[cytochrome b5] + 3 O2 + 5 H(+) = 4alpha-carboxy-4beta-methyl-5alpha-cholest-8-en-3beta-ol + 6 Fe(III)-[cytochrome b5] + 4 H2O. The enzyme catalyses 4alpha-methyl-5alpha-cholest-8-en-3beta-ol + 6 Fe(II)-[cytochrome b5] + 3 O2 + 5 H(+) = 4alpha-carboxy-5alpha-cholest-8-ene-3beta-ol + 6 Fe(III)-[cytochrome b5] + 4 H2O. The protein operates within steroid biosynthesis; zymosterol biosynthesis; zymosterol from lanosterol: step 3/6. It functions in the pathway steroid biosynthesis; cholesterol biosynthesis. Its function is as follows. Catalyzes the three-step monooxygenation required for the demethylation of 4,4-dimethyl and 4alpha-methylsterols, which can be subsequently metabolized to cholesterol. In Sus scrofa (Pig), this protein is Methylsterol monooxygenase 1 (MSMO1).